Consider the following 298-residue polypeptide: ATP synthase gamma chain (298 aa).

This sequence belongs to the ATPase gamma chain family. In terms of assembly, F-type ATPases have 2 components, CF(1) - the catalytic core - and CF(0) - the membrane proton channel. CF(1) has five subunits: alpha(3), beta(3), gamma(1), delta(1), epsilon(1). CF(0) has three main subunits: a, b and c.

Its subcellular location is the cell inner membrane. Produces ATP from ADP in the presence of a proton gradient across the membrane. The gamma chain is believed to be important in regulating ATPase activity and the flow of protons through the CF(0) complex. The protein is ATP synthase gamma chain of Francisella tularensis subsp. holarctica (strain FTNF002-00 / FTA).